The primary structure comprises 1168 residues: ATP-dependent DNA helicase mph1 (1168 aa).

Composition is skewed to polar residues over residues 24–38 (NITS…QLAS) and 59–68 (PTVSQGQATA). A disordered region spans residues 24-132 (NITSHHPSNS…PFRADMPPEQ (109 aa)). The segment covering 71–88 (RAKTASKPTTSATTSRPS) has biased composition (low complexity). Polar residues predominate over residues 89-104 (LAQSSQRKNLRQTTLW). A Helicase ATP-binding domain is found at 162-330 (IVKNGLFNNT…DVIDNLGISH (169 aa)). 175–182 (LPTGLGKT) lines the ATP pocket. A DEAH box motif is present at residues 278–281 (DEAH). Residues 506 to 665 (LVNHFMDAGE…GSRFTFRHDL (160 aa)) form the Helicase C-terminal domain. Disordered stretches follow at residues 690–717 (SQNP…FNMP) and 830–1168 (APAN…DDQE). Basic residues predominate over residues 701 to 714 (SAARMRTKPAKKKF). Over residues 895 to 907 (TAKTKSTGVSKQT) the composition is skewed to polar residues. The segment covering 920 to 936 (DCEEGGNEYDGNVDDDE) has biased composition (acidic residues). Residues 941-959 (RNFRSKGRGRGSGRGKKSQ) show a composition bias toward basic residues. Over residues 985 to 996 (GSDDGADLEDFI) the composition is skewed to acidic residues. The segment covering 1001–1030 (EVTSSLQHRPRGSTSPTTAPDAGSSSLSSK) has biased composition (polar residues).

This sequence belongs to the DEAD box helicase family. DEAH subfamily. FANCM sub-subfamily. As to quaternary structure, interacts with the MHF histone-fold complex to form the FANCM-MHF complex.

The protein resides in the nucleus. The catalysed reaction is ATP + H2O = ADP + phosphate + H(+). ATP-dependent DNA helicase involved in DNA damage repair by homologous recombination and in genome maintenance. Capable of unwinding D-loops. Plays a role in limiting crossover recombinants during mitotic DNA double-strand break (DSB) repair. Component of a FANCM-MHF complex which promotes gene conversion at blocked replication forks, probably by reversal of the stalled fork. This Neurospora crassa (strain ATCC 24698 / 74-OR23-1A / CBS 708.71 / DSM 1257 / FGSC 987) protein is ATP-dependent DNA helicase mph1.